Here is a 1208-residue protein sequence, read N- to C-terminus: Urease accessory protein 2 (1208 aa).

2 coiled-coil regions span residues 187-362 and 400-469; these read RDKI…EKAA and IKAL…MHEQ. Residues 523–633 enclose the SMC hinge domain; that stretch reads DGVFGPLYDL…ICEDLQTAAH (111 aa). Coiled-coil stretches lie at residues 688–771 and 817–903; these read HIEV…YEEE and NRLE…VQTQ. The tract at residues 748 to 773 is disordered; it reads ESSLEEAEGASRDAKAKRASYEEELR. Positions 756–773 are enriched in basic and acidic residues; that stretch reads GASRDAKAKRASYEEELR.

This sequence belongs to the SMC family. SMC3 subfamily. As to quaternary structure, component of cohesin complexes.

Its subcellular location is the nucleus. Central component of cohesin, a complex required for chromosome cohesion during the cell cycle. The cohesin complex may form a large proteinaceous ring within which sister chromatids can be trapped. At anaphase, the complex is cleaved and dissociates from chromatin, allowing sister chromatids to segregate. Cohesion is coupled to DNA replication and is involved in DNA repair. The cohesin complex also plays an important role in spindle pole assembly during mitosis and in chromosomes movement. Is unrelated to urease function in C.neoformans. This chain is Urease accessory protein 2, found in Cryptococcus neoformans var. grubii serotype A (strain H99 / ATCC 208821 / CBS 10515 / FGSC 9487) (Filobasidiella neoformans var. grubii).